A 187-amino-acid polypeptide reads, in one-letter code: Hypoxanthine/guanine phosphoribosyltransferase (187 aa).

It belongs to the purine/pyrimidine phosphoribosyltransferase family. Archaeal HPRT subfamily. In terms of assembly, homodimer.

The protein localises to the cytoplasm. The catalysed reaction is IMP + diphosphate = hypoxanthine + 5-phospho-alpha-D-ribose 1-diphosphate. It carries out the reaction GMP + diphosphate = guanine + 5-phospho-alpha-D-ribose 1-diphosphate. Its pathway is purine metabolism; IMP biosynthesis via salvage pathway; IMP from hypoxanthine: step 1/1. Its function is as follows. Catalyzes a salvage reaction resulting in the formation of IMP that is energically less costly than de novo synthesis. The chain is Hypoxanthine/guanine phosphoribosyltransferase from Methanopyrus kandleri (strain AV19 / DSM 6324 / JCM 9639 / NBRC 100938).